We begin with the raw amino-acid sequence, 172 residues long: Protein-export protein SecB (172 aa).

A disordered region spans residues 152-172 (AQGAEGGNSGIVMPDGSQARH).

The protein belongs to the SecB family. Homotetramer, a dimer of dimers. One homotetramer interacts with 1 SecA dimer.

Its subcellular location is the cytoplasm. Its function is as follows. One of the proteins required for the normal export of preproteins out of the cell cytoplasm. It is a molecular chaperone that binds to a subset of precursor proteins, maintaining them in a translocation-competent state. It also specifically binds to its receptor SecA. The chain is Protein-export protein SecB from Cupriavidus taiwanensis (strain DSM 17343 / BCRC 17206 / CCUG 44338 / CIP 107171 / LMG 19424 / R1) (Ralstonia taiwanensis (strain LMG 19424)).